A 617-amino-acid polypeptide reads, in one-letter code: ATP-dependent rRNA helicase SPB4 (617 aa).

Positions 7–35 match the Q motif motif; it reads WADLDYELQPWIKKAINVSGFDSMTPVQA. The Helicase ATP-binding domain maps to 38–224; it reads IPMFAKNKDV…KTGLRNPVKI (187 aa). 51–58 is an ATP binding site; the sequence is SVTGSGKT. The short motif at 172-175 is the DEAD box element; that stretch reads DEAD. In terms of domain architecture, Helicase C-terminal spans 252 to 406; it reads NLIHIMNNIR…ETDINKNKIS (155 aa).

It belongs to the DEAD box helicase family. DDX55/SPB4 subfamily. Component of pre-60S ribosomal complexes.

The protein localises to the nucleus. It is found in the nucleolus. The catalysed reaction is ATP + H2O = ADP + phosphate + H(+). In terms of biological role, ATP-binding RNA helicase involved in the biogenesis of 60S ribosomal subunits. Binds 90S pre-ribosomal particles and dissociates from pre-60S ribosomal particles after processing of 27SB pre-rRNA. Required for the normal formation of 18S rRNA through the processing of pre-rRNAs at sites A0, A1 and A2, and the normal formation of 25S and 5.8S rRNAs through the processing of pre-rRNAs at sites C1 and C2. The chain is ATP-dependent rRNA helicase SPB4 from Candida glabrata (strain ATCC 2001 / BCRC 20586 / JCM 3761 / NBRC 0622 / NRRL Y-65 / CBS 138) (Yeast).